Consider the following 467-residue polypeptide: Methionine aminopeptidase 2-1 (467 aa).

Basic and acidic residues predominate over residues 1–10; that stretch reads MGSKSPDGHR. Residues 1-105 are disordered; sequence MGSKSPDGHR…TPPRVSLPSI (105 aa). Positions 43-55 are enriched in acidic residues; sequence DGDDEDEDGDDDG. Residues 75–90 are compositionally biased toward basic residues; it reads KKRKRKSNKKKKKKTS. Substrate is bound at residue H219. Residues D240, D251, and H320 each contribute to the a divalent metal cation site. H328 contacts substrate. 2 residues coordinate a divalent metal cation: E353 and E448.

Belongs to the peptidase M24A family. Methionine aminopeptidase eukaryotic type 2 subfamily. It depends on Co(2+) as a cofactor. Zn(2+) is required as a cofactor. Mn(2+) serves as cofactor. The cofactor is Fe(2+).

Its subcellular location is the cytoplasm. It catalyses the reaction Release of N-terminal amino acids, preferentially methionine, from peptides and arylamides.. In terms of biological role, cotranslationally removes the N-terminal methionine from nascent proteins. The N-terminal methionine is often cleaved when the second residue in the primary sequence is small and uncharged (Met-Ala-, Cys, Gly, Pro, Ser, Thr, or Val). In Arthroderma gypseum (strain ATCC MYA-4604 / CBS 118893) (Microsporum gypseum), this protein is Methionine aminopeptidase 2-1.